A 613-amino-acid chain; its full sequence is Histone acetyltransferase KAT7 (613 aa).

The interval 1 to 175 (MAIGVVKRNA…SDLSHRPKRR (175 aa)) is disordered. Phosphoserine is present on residues S12, S52, S55, S59, and S66. Over residues 44 to 59 (VTRSSARLSQSSQDSS) the composition is skewed to low complexity. A phosphothreonine mark is found at T87 and T90. Residues 98–107 (QTRSSGSETE) show a composition bias toward polar residues. S104 is subject to Phosphoserine. Position 106 is a phosphothreonine (T106). The segment covering 112–127 (FSDRETKNTADHDESP) has biased composition (basic and acidic residues). Residues S113 and S126 each carry the phosphoserine modification. The residue at position 130 (T130) is a Phosphothreonine. Low complexity predominate over residues 136 to 147 (PSSESDIDISSP). Residues 150–170 (SHDESIAKDMSLKDSGSDLSH) are compositionally biased toward basic and acidic residues. Phosphoserine occurs at positions 160, 164, 166, and 180. A CCHHC-type zinc finger spans residues 178–221 (HESYNFNMKCPTPGCNSLGHLTGKHERHFSISGCPLYHNLSADE). An N6-acetyllysine mark is found at K201 and K279. A Glycyl lysine isopeptide (Lys-Gly) (interchain with G-Cter in SUMO2) cross-link involves residue K325. One can recognise an MYST-type HAT domain in the interval 334–609 (EGSNMIKTIA…MDPSCLKWTP (276 aa)). A Glycyl lysine isopeptide (Lys-Gly) (interchain with G-Cter in ubiquitin) cross-link involves residue K340. The segment at 367–392 (LYMCEFCLKYMKSQTILRRHMAKCVW) adopts a C2HC MYST-type zinc-finger fold. Zn(2+) is bound by residues C370, C373, H386, and C390. An N6-acetyllysine; by autocatalysis modification is found at K434. Acetyl-CoA is bound by residues 477–479 (ILT) and 485–490 (RQGYGK). Residue S508 is modified to Phosphoserine. Residue E510 is the Proton donor/acceptor of the active site. Acetyl-CoA contacts are provided by S514 and S523.

Belongs to the MYST (SAS/MOZ) family. In terms of assembly, component of the HBO1 complex composed of KAT7/HBO1, MEAF6, ING4 or ING5, and one scaffold subunit: complexes containing BRPF scaffold (BRPF1, BRD1/BRPF2 or BRPF3) direct KAT7/HBO1 specificity towards H3K14ac, while complexes containing JADE scaffold (JADE1, JADE2 and JADE3) mediate acetylation of histone H4. Interacts with MCM2 and ORC1. Interacts with the androgen receptor (AR) in the presence of dihydrotestosterone. Interacts with CDT1. Interacts with MAP2K1 and CUL1. Interacts with p53/TP53; leading to inhibit histone acetyltransferase activity. Phosphorylated at Ser-52 and Ser-55 by ATR in response to DNA damage, promoting its ubiquitination by the CRL4(DDB2) complex and subsequent degradation. Phosphorylation at Ser-52 and Ser-55 by ATR in response to ultraviolet-induced DNA, promotes localization to DNA damage sites. Phosphorylation at Ser-59 by PLK1 during mitosis seems important for prereplicative complex formation and DNA replication licensing, and requires prior phosphorylation at Thr-87 and Thr-90 by CDK1. Phosphorylated by MAP2K1, which accelerates its degradation. In terms of processing, ubiquitinated at Lys-340, leading to proteasomal degradation. Ubiquitinated by the CRL4(DDB2) complex following phosphorylation by ATR, leading to its subsequent degradation. Post-translationally, autoacetylation at Lys-434 is required for proper function. In terms of tissue distribution, widely expressed in adult tissues.

It localises to the nucleus. It is found in the chromosome. The protein localises to the centromere. The protein resides in the cytoplasm. Its subcellular location is the cytosol. The enzyme catalyses L-lysyl-[protein] + acetyl-CoA = N(6)-acetyl-L-lysyl-[protein] + CoA + H(+). Its activity is regulated as follows. Histone acetyltransferase activity is inhibited by GMNN in the context of a complex with CDT1, inhibiting histone H4 acetylation and DNA replication licensing. Its function is as follows. Catalytic subunit of histone acetyltransferase HBO1 complexes, which specifically mediate acetylation of histone H3 at 'Lys-14' (H3K14ac), thereby regulating various processes, such as gene transcription, protein ubiquitination, immune regulation, stem cell pluripotent and self-renewal maintenance and embryonic development. Some complexes also catalyze acetylation of histone H4 at 'Lys-5', 'Lys-8' and 'Lys-12' (H4K5ac, H4K8ac and H4K12ac, respectively), regulating DNA replication initiation, regulating DNA replication initiation. Specificity of the HBO1 complexes is determined by the scaffold subunit: complexes containing BRPF scaffold (BRPF1, BRD1/BRPF2 or BRPF3) direct KAT7/HBO1 specificity towards H3K14ac, while complexes containing JADE (JADE1, JADE2 and JADE3) scaffold direct KAT7/HBO1 specificity towards histone H4. H3K14ac promotes transcriptional elongation by facilitating the processivity of RNA polymerase II. Acts as a key regulator of hematopoiesis by forming a complex with BRD1/BRPF2, directing KAT7/HBO1 specificity towards H3K14ac and promoting erythroid differentiation. H3K14ac is also required for T-cell development. KAT7/HBO1-mediated acetylation facilitates two consecutive steps, licensing and activation, in DNA replication initiation: H3K14ac facilitates the activation of replication origins, and histone H4 acetylation (H4K5ac, H4K8ac and H4K12ac) facilitates chromatin loading of MCM complexes, promoting DNA replication licensing. Acts as a positive regulator of centromeric CENPA assembly: recruited to centromeres and mediates histone acetylation, thereby preventing centromere inactivation mediated by SUV39H1, possibly by increasing histone turnover/exchange. Involved in nucleotide excision repair: phosphorylation by ATR in response to ultraviolet irradiation promotes its localization to DNA damage sites, where it mediates histone acetylation to facilitate recruitment of XPC at the damaged DNA sites. Acts as an inhibitor of NF-kappa-B independently of its histone acetyltransferase activity. Functionally, plays a central role in the maintenance of leukemia stem cells in acute myeloid leukemia (AML). Acts by mediating acetylation of histone H3 at 'Lys-14' (H3K14ac), thereby facilitating the processivity of RNA polymerase II to maintain the high expression of key genes, such as HOXA9 and HOXA10 that help to sustain the functional properties of leukemia stem cells. The protein is Histone acetyltransferase KAT7 of Mus musculus (Mouse).